Here is a 158-residue protein sequence, read N- to C-terminus: NADH-quinone oxidoreductase subunit B (158 aa).

4 residues coordinate [4Fe-4S] cluster: C37, C38, C102, and C132.

Belongs to the complex I 20 kDa subunit family. As to quaternary structure, NDH-1 is composed of 14 different subunits. Subunits NuoB, C, D, E, F, and G constitute the peripheral sector of the complex. The cofactor is [4Fe-4S] cluster.

The protein localises to the cell inner membrane. The catalysed reaction is a quinone + NADH + 5 H(+)(in) = a quinol + NAD(+) + 4 H(+)(out). NDH-1 shuttles electrons from NADH, via FMN and iron-sulfur (Fe-S) centers, to quinones in the respiratory chain. The immediate electron acceptor for the enzyme in this species is believed to be ubiquinone. Couples the redox reaction to proton translocation (for every two electrons transferred, four hydrogen ions are translocated across the cytoplasmic membrane), and thus conserves the redox energy in a proton gradient. In Thiobacillus denitrificans (strain ATCC 25259 / T1), this protein is NADH-quinone oxidoreductase subunit B.